Consider the following 266-residue polypeptide: Cell division protein FtsQ (266 aa).

Residues 1–31 (MRQKTSSNKKKQKNTNNISLRRKLGLMYKKA) lie on the Cytoplasmic side of the membrane. Residues 32–52 (ILGLKIVLMIFVCLFVFTKYF) form a helical membrane-spanning segment. Residues 53–266 (TSIKTYLITN…DRNKYYIQKY (214 aa)) are Periplasmic-facing. Positions 72-140 (FRLENVIIEG…NTVYIKLFER (69 aa)) constitute a POTRA domain.

The protein belongs to the FtsQ/DivIB family. FtsQ subfamily.

It localises to the cell inner membrane. Essential cell division protein. This is Cell division protein FtsQ from Rickettsia typhi (strain ATCC VR-144 / Wilmington).